A 546-amino-acid polypeptide reads, in one-letter code: Chaperonin GroEL 2 (546 aa).

ATP-binding positions include 30-33 (TLGP), lysine 51, 87-91 (DGTTT), glycine 415, 479-481 (NAA), and aspartate 495. Positions 524–546 (APKDAPPAAPAGVPGAGGPGFDF) are disordered. The span at 537 to 546 (PGAGGPGFDF) shows a compositional bias: gly residues.

The protein belongs to the chaperonin (HSP60) family. As to quaternary structure, forms a cylinder of 14 subunits composed of two heptameric rings stacked back-to-back. Interacts with the co-chaperonin GroES.

Its subcellular location is the cytoplasm. The enzyme catalyses ATP + H2O + a folded polypeptide = ADP + phosphate + an unfolded polypeptide.. Together with its co-chaperonin GroES, plays an essential role in assisting protein folding. The GroEL-GroES system forms a nano-cage that allows encapsulation of the non-native substrate proteins and provides a physical environment optimized to promote and accelerate protein folding. In Burkholderia pseudomallei (strain 1710b), this protein is Chaperonin GroEL 2.